The following is a 45-amino-acid chain: Sperm-specific protein Phi-3 (45 aa).

The disordered stretch occupies residues 1–45 (AKAKRSPRKKKAAVKKSSKSKAKKPKSPKKKKAAKKPAKKAAKKK).

The protein localises to the nucleus. It localises to the chromosome. Functionally, involved in nuclear basic protein transition: histones are replaced by spermatid specific proteins which are themselves replaced by protamines in late spermatids. The polypeptide is Sperm-specific protein Phi-3 (Mytilus californianus (California mussel)).